The chain runs to 355 residues: Alanine racemase (355 aa).

The active-site Proton acceptor; specific for D-alanine is Lys34. Lys34 carries the N6-(pyridoxal phosphate)lysine modification. A substrate-binding site is contributed by Arg133. The Proton acceptor; specific for L-alanine role is filled by Tyr249. A substrate-binding site is contributed by Met297.

This sequence belongs to the alanine racemase family. Pyridoxal 5'-phosphate serves as cofactor.

The enzyme catalyses L-alanine = D-alanine. Its pathway is amino-acid biosynthesis; D-alanine biosynthesis; D-alanine from L-alanine: step 1/1. Functionally, catalyzes the interconversion of L-alanine and D-alanine. May also act on other amino acids. This is Alanine racemase (alr) from Rickettsia africae (strain ESF-5).